An 846-amino-acid chain; its full sequence is Spindle pole body component SPC98 (846 aa).

Residues S124 and S136 each carry the phosphoserine modification.

Belongs to the TUBGCP family. As to quaternary structure, interacts with TUB4, SPC72 and SPC97.

It is found in the nucleus. It localises to the cytoplasm. The protein localises to the cytoskeleton. Its subcellular location is the microtubule organizing center. The protein resides in the spindle pole body. In terms of biological role, involved in microtubule organization by the microtubule organizing center, the spindle pole body (SPB). Probably part of the microtubule attachment site at the SPB. The protein is Spindle pole body component SPC98 (SPC98) of Saccharomyces cerevisiae (strain ATCC 204508 / S288c) (Baker's yeast).